Here is a 438-residue protein sequence, read N- to C-terminus: Proline--tRNA ligase (438 aa).

The protein belongs to the class-II aminoacyl-tRNA synthetase family. ProS type 2 subfamily. As to quaternary structure, homodimer.

It localises to the cytoplasm. It carries out the reaction tRNA(Pro) + L-proline + ATP = L-prolyl-tRNA(Pro) + AMP + diphosphate. In terms of biological role, catalyzes the attachment of proline to tRNA(Pro) in a two-step reaction: proline is first activated by ATP to form Pro-AMP and then transferred to the acceptor end of tRNA(Pro). This Rickettsia canadensis (strain McKiel) protein is Proline--tRNA ligase.